The sequence spans 62 residues: uncharacterized protein (62 aa).

This is an uncharacterized protein from Escherichia coli.